A 250-amino-acid polypeptide reads, in one-letter code: 3-deoxy-manno-octulosonate cytidylyltransferase (250 aa).

The protein belongs to the KdsB family.

The protein resides in the cytoplasm. The enzyme catalyses 3-deoxy-alpha-D-manno-oct-2-ulosonate + CTP = CMP-3-deoxy-beta-D-manno-octulosonate + diphosphate. It functions in the pathway nucleotide-sugar biosynthesis; CMP-3-deoxy-D-manno-octulosonate biosynthesis; CMP-3-deoxy-D-manno-octulosonate from 3-deoxy-D-manno-octulosonate and CTP: step 1/1. Its pathway is bacterial outer membrane biogenesis; lipopolysaccharide biosynthesis. Activates KDO (a required 8-carbon sugar) for incorporation into bacterial lipopolysaccharide in Gram-negative bacteria. The chain is 3-deoxy-manno-octulosonate cytidylyltransferase from Francisella tularensis subsp. holarctica (strain LVS).